A 941-amino-acid chain; its full sequence is MAKHDLSDATLPDFKALEAECMSIVLQNGKVPETRAAILPLLKKASIDGREAALRHLTTNGSGLECAGMISNLQDNLITLVHRMVTQAVYPTTQQEFAVAAVGGYGRSTLAPGSDIDLLFLLSVKAGADARKAVEFLLYILWDLGFKVGHATRLVEECIRLSRTDMTIRTAILETRFICGEALLVGELQKRFDAEVVEKTAPEFIAAKLAERDERHRKAGDTRYLVEPNVKEGKGGLRDLHTLFWIAKYYYRISDPADLVKLGVLSRQEWRMFQKSDDFLWAVRCHMHFATGKPEERLSFDLQPEIARNLGYNARPGLSEVERFMKHYFHVAKNVGDLTRIVCASLEDKQAKAAPGLTAAIGRFAHRPRRIPGTPEFIEDRGRIALSGPDIFKRDPINIMRFFHVADLHGLEFHPDALKAITRCLPLIDHDFRENEEANRLFLSILTSKRDPALMLTRMNEAGVLGKFIPDFGRIVSMMQFNMYHHYTVDEHLIRSVGILAEVDQGQHADIHPLAVKLMPNIEERTVLFVAVLLHDIAKGRQEDHSIAGAKVARRLCPRLGLNDKQTELVVWLIDQHLLMSMVAQTRDLHDRKTITDFAEKVQSLDRLRMLLVLTVCDIRAVGPGVWNGWKGQLLRTLYYETELLLSGGFSESPRKERAKQAAEQLAEALSDWSQKDQKTYTKLHYQPYLLTVPLEDQVRHAHFIRQADKADQALATMVRTHSFHAITEITVLAPDHPRLLSIIAGACAAAGANIADAQIFTTSDGRALDTILINREFPIDEDEMRRANTISKMIEDVLAGKKRLPEVIATRTKGRKRNKTFTVKPHVTISNSLSNKFTVIEIECLDRIGLLAEVTAVLADLSLDIHSARITTFGEKVIDTFYVIDLVGQKITNENRQGSISVRLKAVMSEQPDELREQMPSGIIAPAATKSPAAEKKARV.

Residues 1–372 (MAKHDLSDAT…RFAHRPRRIP (372 aa)) are uridylyltransferase. The interval 373–728 (GTPEFIEDRG…VRTHSFHAIT (356 aa)) is uridylyl-removing. An HD domain is found at 489 to 611 (VDEHLIRSVG…VQSLDRLRML (123 aa)). ACT domains lie at 729 to 810 (EITV…EVIA) and 840 to 919 (VIEI…LREQ). Positions 916–941 (LREQMPSGIIAPAATKSPAAEKKARV) are disordered.

Belongs to the GlnD family. The cofactor is Mg(2+).

The enzyme catalyses [protein-PII]-L-tyrosine + UTP = [protein-PII]-uridylyl-L-tyrosine + diphosphate. It carries out the reaction [protein-PII]-uridylyl-L-tyrosine + H2O = [protein-PII]-L-tyrosine + UMP + H(+). Uridylyltransferase (UTase) activity is inhibited by glutamine, while glutamine activates uridylyl-removing (UR) activity. In terms of biological role, modifies, by uridylylation and deuridylylation, the PII regulatory proteins (GlnB and homologs), in response to the nitrogen status of the cell that GlnD senses through the glutamine level. Under low glutamine levels, catalyzes the conversion of the PII proteins and UTP to PII-UMP and PPi, while under higher glutamine levels, GlnD hydrolyzes PII-UMP to PII and UMP (deuridylylation). Thus, controls uridylylation state and activity of the PII proteins, and plays an important role in the regulation of nitrogen assimilation and metabolism. The chain is Bifunctional uridylyltransferase/uridylyl-removing enzyme from Allorhizobium ampelinum (strain ATCC BAA-846 / DSM 112012 / S4) (Agrobacterium vitis (strain S4)).